The sequence spans 77 residues: Large ribosomal subunit protein uL24c (77 aa).

This sequence belongs to the universal ribosomal protein uL24 family. Part of the 50S ribosomal subunit.

The protein resides in the plastid. The protein localises to the chloroplast. In terms of biological role, one of two assembly initiator proteins, it binds directly to the 5'-end of the 23S rRNA, where it nucleates assembly of the 50S subunit. This chain is Large ribosomal subunit protein uL24c (rpl24), found in Trieres chinensis (Marine centric diatom).